The following is a 205-amino-acid chain: Ras-related protein RABC2b (205 aa).

20–27 is a GTP binding site; the sequence is GDSGVGKS. The Effector region signature appears at 41–49; the sequence is LAPTIGVDF. Residues 67-71, 127-130, and 157-158 each bind GTP; these read DTAGQ, NKVD, and SA. 2 S-geranylgeranyl cysteine lipidation sites follow: Cys202 and Cys203.

This sequence belongs to the small GTPase superfamily. Rab family.

Its subcellular location is the cell membrane. Its function is as follows. Intracellular vesicle trafficking and protein transport. The protein is Ras-related protein RABC2b (RABC2B) of Arabidopsis thaliana (Mouse-ear cress).